We begin with the raw amino-acid sequence, 344 residues long: Holliday junction branch migration complex subunit RuvB (344 aa).

Positions 1–185 (MSTSRSDALK…FGIDFRYDYY (185 aa)) are large ATPase domain (RuvB-L). ATP-binding positions include L24, R25, G66, K69, T70, T71, 132–134 (EDY), R175, Y185, and R222. T70 is a Mg(2+) binding site. The segment at 186-256 (TADLLQEITQ…IADRALNALD (71 aa)) is small ATPAse domain (RuvB-S). Positions 259–344 (EEGLDDMDAR…AADQDLFDQE (86 aa)) are head domain (RuvB-H). Residues R314 and R319 each contribute to the DNA site.

The protein belongs to the RuvB family. As to quaternary structure, homohexamer. Forms an RuvA(8)-RuvB(12)-Holliday junction (HJ) complex. HJ DNA is sandwiched between 2 RuvA tetramers; dsDNA enters through RuvA and exits via RuvB. An RuvB hexamer assembles on each DNA strand where it exits the tetramer. Each RuvB hexamer is contacted by two RuvA subunits (via domain III) on 2 adjacent RuvB subunits; this complex drives branch migration. In the full resolvosome a probable DNA-RuvA(4)-RuvB(12)-RuvC(2) complex forms which resolves the HJ.

Its subcellular location is the cytoplasm. It carries out the reaction ATP + H2O = ADP + phosphate + H(+). In terms of biological role, the RuvA-RuvB-RuvC complex processes Holliday junction (HJ) DNA during genetic recombination and DNA repair, while the RuvA-RuvB complex plays an important role in the rescue of blocked DNA replication forks via replication fork reversal (RFR). RuvA specifically binds to HJ cruciform DNA, conferring on it an open structure. The RuvB hexamer acts as an ATP-dependent pump, pulling dsDNA into and through the RuvAB complex. RuvB forms 2 homohexamers on either side of HJ DNA bound by 1 or 2 RuvA tetramers; 4 subunits per hexamer contact DNA at a time. Coordinated motions by a converter formed by DNA-disengaged RuvB subunits stimulates ATP hydrolysis and nucleotide exchange. Immobilization of the converter enables RuvB to convert the ATP-contained energy into a lever motion, pulling 2 nucleotides of DNA out of the RuvA tetramer per ATP hydrolyzed, thus driving DNA branch migration. The RuvB motors rotate together with the DNA substrate, which together with the progressing nucleotide cycle form the mechanistic basis for DNA recombination by continuous HJ branch migration. Branch migration allows RuvC to scan DNA until it finds its consensus sequence, where it cleaves and resolves cruciform DNA. The chain is Holliday junction branch migration complex subunit RuvB from Salinibacter ruber (strain DSM 13855 / M31).